The sequence spans 333 residues: Dihydroorotate dehydrogenase (quinone) (333 aa).

Residues 56–60 and Thr-80 contribute to the FMN site; that span reads AGLDK. Residue Lys-60 coordinates substrate. 105-109 lines the substrate pocket; the sequence is NRMGF. FMN-binding residues include Asn-133 and Asn-166. Residue Asn-166 coordinates substrate. The active-site Nucleophile is the Ser-169. A substrate-binding site is contributed by Asn-171. Residues Lys-211 and Thr-239 each coordinate FMN. 240–241 is a binding site for substrate; sequence NT. FMN-binding positions include Gly-262, Gly-291, and 312-313; that span reads YS.

Belongs to the dihydroorotate dehydrogenase family. Type 2 subfamily. In terms of assembly, monomer. Requires FMN as cofactor.

Its subcellular location is the cell membrane. The enzyme catalyses (S)-dihydroorotate + a quinone = orotate + a quinol. Its pathway is pyrimidine metabolism; UMP biosynthesis via de novo pathway; orotate from (S)-dihydroorotate (quinone route): step 1/1. Its function is as follows. Catalyzes the conversion of dihydroorotate to orotate with quinone as electron acceptor. The sequence is that of Dihydroorotate dehydrogenase (quinone) from Legionella pneumophila (strain Corby).